A 612-amino-acid chain; its full sequence is Dihydroxy-acid dehydratase (612 aa).

Residue Asp81 participates in Mg(2+) binding. Cys122 is a [2Fe-2S] cluster binding site. The Mg(2+) site is built by Asp123 and Lys124. Lys124 carries the post-translational modification N6-carboxylysine. Cys195 contacts [2Fe-2S] cluster. Glu491 is a Mg(2+) binding site. Catalysis depends on Ser517, which acts as the Proton acceptor.

The protein belongs to the IlvD/Edd family. Homodimer. It depends on [2Fe-2S] cluster as a cofactor. Mg(2+) serves as cofactor.

The catalysed reaction is (2R)-2,3-dihydroxy-3-methylbutanoate = 3-methyl-2-oxobutanoate + H2O. The enzyme catalyses (2R,3R)-2,3-dihydroxy-3-methylpentanoate = (S)-3-methyl-2-oxopentanoate + H2O. The protein operates within amino-acid biosynthesis; L-isoleucine biosynthesis; L-isoleucine from 2-oxobutanoate: step 3/4. It functions in the pathway amino-acid biosynthesis; L-valine biosynthesis; L-valine from pyruvate: step 3/4. Functions in the biosynthesis of branched-chain amino acids. Catalyzes the dehydration of (2R,3R)-2,3-dihydroxy-3-methylpentanoate (2,3-dihydroxy-3-methylvalerate) into 2-oxo-3-methylpentanoate (2-oxo-3-methylvalerate) and of (2R)-2,3-dihydroxy-3-methylbutanoate (2,3-dihydroxyisovalerate) into 2-oxo-3-methylbutanoate (2-oxoisovalerate), the penultimate precursor to L-isoleucine and L-valine, respectively. This Rhizobium etli (strain CIAT 652) protein is Dihydroxy-acid dehydratase.